Reading from the N-terminus, the 405-residue chain is MATAWYKQVNPPQRKALFSAWLGYVFDGFDFMMIFYILHIIKADLGITDIQATLIGTVAFIARPIGGGFFGAMADKYGRKPMMMWAIFIYSVGTGLSGIATNLYMLAVCRFIVGLGMSGEYACASTYAVESWPKNLQSKASAFLVSGFSVGNIIAAQIIPQFAEVYGWRNSFFIGLLPVLLVLWIRKSAPESQEWIEDKYKDKSTFLSVFRKPHLSISMIVFLVCFCLFGANWPINGLLPSYLADNGVNTVVISTLMTIAGLGTLTGTIFFGFVGDKIGVKKAFVVGLITSFIFLCPLFFISVKNSSLIGLCLFGLMFTNLGIAGLVPKFIYDYFPTKLRGLGTGLIYNLGATGGMAAPVLATYISGYYGLGVSLFIVTVAFSALLILLVGFDIPGKIYKLSVAK.

At 1-20 the chain is on the cytoplasmic side; it reads MATAWYKQVNPPQRKALFSA. Residues 21 to 41 traverse the membrane as a helical segment; it reads WLGYVFDGFDFMMIFYILHII. The Periplasmic portion of the chain corresponds to 42 to 53; the sequence is KADLGITDIQAT. A helical transmembrane segment spans residues 54–74; sequence LIGTVAFIARPIGGGFFGAMA. Topologically, residues 75-80 are cytoplasmic; it reads DKYGRK. A helical membrane pass occupies residues 81–101; it reads PMMMWAIFIYSVGTGLSGIAT. Asn102 is a topological domain (periplasmic). Residues 103-123 traverse the membrane as a helical segment; it reads LYMLAVCRFIVGLGMSGEYAC. The Cytoplasmic segment spans residues 124–139; sequence ASTYAVESWPKNLQSK. A helical transmembrane segment spans residues 140–160; sequence ASAFLVSGFSVGNIIAAQIIP. The Periplasmic portion of the chain corresponds to 161 to 164; sequence QFAE. Residues 165 to 185 traverse the membrane as a helical segment; the sequence is VYGWRNSFFIGLLPVLLVLWI. Residues 186–214 are Cytoplasmic-facing; that stretch reads RKSAPESQEWIEDKYKDKSTFLSVFRKPH. Residues 215-235 traverse the membrane as a helical segment; the sequence is LSISMIVFLVCFCLFGANWPI. Over 236-250 the chain is Periplasmic; it reads NGLLPSYLADNGVNT. The chain crosses the membrane as a helical span at residues 251-271; sequence VVISTLMTIAGLGTLTGTIFF. The Cytoplasmic portion of the chain corresponds to 272-282; the sequence is GFVGDKIGVKK. The chain crosses the membrane as a helical span at residues 283-303; the sequence is AFVVGLITSFIFLCPLFFISV. The Periplasmic portion of the chain corresponds to 304–307; it reads KNSS. A helical transmembrane segment spans residues 308–328; sequence LIGLCLFGLMFTNLGIAGLVP. The Cytoplasmic portion of the chain corresponds to 329–344; the sequence is KFIYDYFPTKLRGLGT. The helical transmembrane segment at 345–365 threads the bilayer; it reads GLIYNLGATGGMAAPVLATYI. The Periplasmic segment spans residues 366 to 371; that stretch reads SGYYGL. Residues 372–392 traverse the membrane as a helical segment; sequence GVSLFIVTVAFSALLILLVGF. Topologically, residues 393–405 are cytoplasmic; it reads DIPGKIYKLSVAK.

The protein belongs to the major facilitator superfamily. Sugar transporter (TC 2.A.1.1) family.

It is found in the cell inner membrane. Probably transports across the inner membrane the two dehydrated forms of N-acetylneuraminate (Neu5Ac), 2,7-anhydro-N-acetylneuraminate (2,7-AN) and 2-deoxy-2,3-didehydro-N-acetylneuraminate (2,3-EN). The chain is Sialic acid transporter NanX from Escherichia coli (strain K12).